The chain runs to 164 residues: Large ribosomal subunit protein bL21 (164 aa).

The tract at residues 105–164 (KAPTIGPRAKKEKKVEAAPADGEAPAKKAPAKKAAAKKAAPKAAAKKAPAKKAAPKAKSE) is disordered. Residues 133–164 (APAKKAAAKKAAPKAAAKKAPAKKAAPKAKSE) are compositionally biased toward basic residues.

The protein belongs to the bacterial ribosomal protein bL21 family. Part of the 50S ribosomal subunit. Contacts protein L20.

Functionally, this protein binds to 23S rRNA in the presence of protein L20. The protein is Large ribosomal subunit protein bL21 of Afipia carboxidovorans (strain ATCC 49405 / DSM 1227 / KCTC 32145 / OM5) (Oligotropha carboxidovorans).